A 309-amino-acid chain; its full sequence is Protein lifeguard 3 (309 aa).

Disordered regions lie at residues 1-31 and 64-84; these read MSNPSAPPPYEDHNPLYPGSPPPGGYGQPSV and PMNYGHDYNEEERAGSDSFRP. The span at 70–84 shows a compositional bias: basic and acidic residues; that stretch reads DYNEEERAGSDSFRP. Phosphoserine occurs at positions 79 and 81. 7 helical membrane-spanning segments follow: residues 101 to 121, 132 to 152, 163 to 183, 188 to 208, 221 to 241, 244 to 264, and 286 to 306; these read YCIISVQLLITVAIIAIFTFV, VAVYYVSYAVFLVTYLTLACC, IILLTIFTLALGFVTGTISSM, AVIIAMIITAVVSISVTIFCF, FCVLGIVLMVTGIVTSIVLIF, IYWLHMVYAALGAICFTLFLA, and GALQIYTDIVYIFTFVLQLVG.

This sequence belongs to the BI1 family. LFG subfamily. Expressed in most tissues except spleen, thymus and testis.

The protein resides in the membrane. It is found in the lysosome membrane. The protein localises to the endosome membrane. In terms of biological role, negatively regulates aortic matrix metalloproteinase-9 (MMP9) production and may play a protective role in vascular remodeling. In Mus musculus (Mouse), this protein is Protein lifeguard 3 (Tmbim1).